We begin with the raw amino-acid sequence, 651 residues long: Beta-glucuronidase (651 aa).

The signal sequence occupies residues 1 to 22 (MLRGPAAVWAALGPLLWACGLA). Asn-172 and Asn-419 each carry an N-linked (GlcNAc...) asparagine glycan. Glu-450 functions as the Proton donor in the catalytic mechanism. A glycan (N-linked (GlcNAc...) asparagine) is linked at Asn-630.

The protein belongs to the glycosyl hydrolase 2 family. As to quaternary structure, homotetramer.

It is found in the lysosome. The catalysed reaction is a beta-D-glucuronoside + H2O = D-glucuronate + an alcohol. Its activity is regulated as follows. Inhibited by L-aspartic acid. In terms of biological role, plays an important role in the degradation of dermatan and keratan sulfates. This Felis catus (Cat) protein is Beta-glucuronidase (GUSB).